Reading from the N-terminus, the 575-residue chain is Sulfite reductase [NADPH] hemoprotein beta-component (575 aa).

The [4Fe-4S] cluster site is built by Cys-440, Cys-446, Cys-485, and Cys-489. Cys-489 is a binding site for siroheme.

This sequence belongs to the nitrite and sulfite reductase 4Fe-4S domain family. As to quaternary structure, alpha(8)-beta(8). The alpha component is a flavoprotein, the beta component is a hemoprotein. The cofactor is siroheme. [4Fe-4S] cluster is required as a cofactor.

The enzyme catalyses hydrogen sulfide + 3 NADP(+) + 3 H2O = sulfite + 3 NADPH + 4 H(+). It functions in the pathway sulfur metabolism; hydrogen sulfide biosynthesis; hydrogen sulfide from sulfite (NADPH route): step 1/1. Functionally, component of the sulfite reductase complex that catalyzes the 6-electron reduction of sulfite to sulfide. This is one of several activities required for the biosynthesis of L-cysteine from sulfate. This Chromohalobacter salexigens (strain ATCC BAA-138 / DSM 3043 / CIP 106854 / NCIMB 13768 / 1H11) protein is Sulfite reductase [NADPH] hemoprotein beta-component.